A 99-amino-acid polypeptide reads, in one-letter code: Plastocyanin B'/B'' (99 aa).

A Plastocyanin-like domain is found at 1 to 99 (IEVLLGSDDG…AGMVGKVTVN (99 aa)). Cu cation-binding residues include histidine 37, cysteine 84, histidine 87, and methionine 92.

Belongs to the plastocyanin family. The cofactor is Cu(2+).

The protein localises to the plastid. It is found in the chloroplast thylakoid membrane. Its function is as follows. Participates in electron transfer between P700 and the cytochrome b6-f complex in photosystem I. This Nicotiana tabacum (Common tobacco) protein is Plastocyanin B'/B''.